A 192-amino-acid polypeptide reads, in one-letter code: Ribosome hibernation promotion factor (192 aa).

The segment at 95-129 (RVNRKHKTHGEPEAFVAEVQEAPPENVDDVNAEPT) is disordered. The segment covering 120-129 (NVDDVNAEPT) has biased composition (acidic residues).

The protein belongs to the HPF/YfiA ribosome-associated protein family. Long HPF subfamily. As to quaternary structure, interacts with 100S ribosomes.

It localises to the cytoplasm. Functionally, required for dimerization of active 70S ribosomes into 100S ribosomes in stationary phase; 100S ribosomes are translationally inactive and sometimes present during exponential growth. This is Ribosome hibernation promotion factor from Staphylococcus haemolyticus (strain JCSC1435).